A 438-amino-acid polypeptide reads, in one-letter code: uncharacterized protein (438 aa).

Disordered regions lie at residues 1–22 (MRDNTAKGITAGSGSQQTTYDP) and 156–264 (DTAK…PWRP). Residues 156–170 (DTAKSNEKLQGDESK) are compositionally biased toward basic and acidic residues. Positions 171–189 (SSNGSSSTSTTTQRGSTNS) are enriched in low complexity. Basic and acidic residues predominate over residues 191–206 (TKVKALKIEVKKKSDS).

Belongs to the adhesin P1 family.

This is an uncharacterized protein from Mycoplasma pneumoniae (strain ATCC 29342 / M129 / Subtype 1) (Mycoplasmoides pneumoniae).